A 1072-amino-acid polypeptide reads, in one-letter code: MLGDGKEGTSTIPGFNQIQFEGFYRFIDQGLIEELSKFPKIEDIDHEIEFQLFVETYQLVEPLIKERNAVYESLTYSSELYVSAGLIWKTSRNMQEQRIFIGNIPLMNSLGTSIVNGIYRIVINQILQSPGIYYQSELDHNGISVYTGTIISDWGGRLELEIDKKARIWARVSRKQKISILVLSSAMGSNLREILENVSYPEIFLSFLTDKEKKKIGSKENAILEFYQQFSCVGGDPIFSESLCKELQKKFFHQRCELGRIGRRNINWRLNLNIPQNNIFLLPRDILAAADHLIGMKFGMGTLDDMNHLKNKRIRSVADLLQDQLGLALARLENVVKGTISGAIRHKLIPTPQNLVTSTPLTTTYESFFGLHPLSQVLDRTNPLTQIVHGRKLSYLGPGGLTGRTANFRIRDIHPSHYGRICPIDTSEGINVGLIGSLSIHARIGDWGSLESPFYELFEKSKKARIRMLFLSPSQDEYYMIAAGNSLALNRGIQEEQAVPARYRQEFLTIAWEEVHLRSIFPFQYFSIGASLIPFIEHNDANRALMSSNMQRQAVPLSRSEKCIVGTGLERQVALDSGVPAIAEHEGKILYTDTEKIVLSGSGDTLTIPLIMYQRSNKNTCMHQKPQVRRGKCIKKGQILADGAATVGGELALGKNILVAYMPWEGYNFEDAVLISECLVYGDIYTSFHIRKYEIQTHVTTQGPERITKEIPHLEGRLLRNLDKNGIVMLGSWVETGDILVGKLTPQVAKESSYAPEDRLLRAILGIQVSTSKETCLKLPIGGRGRVIDVRWVQKKGGSSYNPEIIRVYISQKREIKVGDKVAGRHGNKGIISKILPRQDMPYLQDGRPVDMVFNPLGVPSRMNVGQIFECSLGLAGSLLDRHYRIAPFDERYEQEASRKLVFSELYEASKQTANPWVFEPEYPGKSRIFDGRTGDPFEQPVIIGKPYILKLIHQVDDKIHGRSSGHYALVTQQPLRGRSKQGGQRVGEMEVWALEGFGVAHILQEMLTYKSDHIRARQEVLGTTIIGGTIPKPEDAPESFRLLVRELRSLALELNHFFVSEKNFQINRKEV.

Belongs to the RNA polymerase beta chain family. In terms of assembly, in plastids the minimal PEP RNA polymerase catalytic core is composed of four subunits: alpha, beta, beta', and beta''. When a (nuclear-encoded) sigma factor is associated with the core the holoenzyme is formed, which can initiate transcription.

The protein localises to the plastid. The protein resides in the chloroplast. The enzyme catalyses RNA(n) + a ribonucleoside 5'-triphosphate = RNA(n+1) + diphosphate. Its function is as follows. DNA-dependent RNA polymerase catalyzes the transcription of DNA into RNA using the four ribonucleoside triphosphates as substrates. This chain is DNA-directed RNA polymerase subunit beta, found in Olimarabidopsis pumila (Dwarf rocket).